Here is a 292-residue protein sequence, read N- to C-terminus: MADITAAMVKELRERTAAGMMDCKKALTEANGDIELAIENMRKSGQAKAAKKAGRIAAEGIIIARSAGNVAVMLELNCETDFVAKDASFRALGEKVAEIALADKIADLEVLKNTDFGNGESVQVTLNNLIAKIGENMNLRRIVIAEGDNLATYIHGSRIGVITKLVGGDADLAKDLAMHVAANSPQFVKPEDVSAEVVAKEREIQVDIAINSGKPKEIAEKMVEGRMKKFTGDISLTGQPFVKDPSVIVADLLKQKGADVQDFIRFEVGEGIEKQETDFAAEVQAQIAAMKG.

The tract at residues 80-83 (TDFV) is involved in Mg(2+) ion dislocation from EF-Tu.

The protein belongs to the EF-Ts family.

The protein resides in the cytoplasm. Associates with the EF-Tu.GDP complex and induces the exchange of GDP to GTP. It remains bound to the aminoacyl-tRNA.EF-Tu.GTP complex up to the GTP hydrolysis stage on the ribosome. This Tolumonas auensis (strain DSM 9187 / NBRC 110442 / TA 4) protein is Elongation factor Ts.